We begin with the raw amino-acid sequence, 242 residues long: N-glycosylase/DNA lyase (242 aa).

Residues Q26, S53, and W64 each contribute to the 8-oxoguanine site. The helix-hairpin-helix stretch occupies residues 120-184; sequence EGYYKNMKML…EDLRIKSVTS (65 aa). K144 functions as the Schiff-base intermediate with DNA in the catalytic mechanism. Residues F148 and P174 each contribute to the 8-oxoguanine site. The active site involves D176. 8-oxoguanine is bound by residues D210 and W214.

It belongs to the archaeal N-glycosylase/DNA lyase (AGOG) family.

The enzyme catalyses 2'-deoxyribonucleotide-(2'-deoxyribose 5'-phosphate)-2'-deoxyribonucleotide-DNA = a 3'-end 2'-deoxyribonucleotide-(2,3-dehydro-2,3-deoxyribose 5'-phosphate)-DNA + a 5'-end 5'-phospho-2'-deoxyribonucleoside-DNA + H(+). DNA repair enzyme that is part of the base excision repair (BER) pathway; protects from oxidative damage by removing the major product of DNA oxidation, 8-oxoguanine (GO), from single- and double-stranded DNA substrates. The polypeptide is N-glycosylase/DNA lyase (Pyrococcus furiosus (strain ATCC 43587 / DSM 3638 / JCM 8422 / Vc1)).